The primary structure comprises 490 residues: DNA-binding protein D-ETS-3 (490 aa).

Disordered stretches follow at residues Thr190–Gly255 and Ser271–Arg294. Positions His196–Thr207 are enriched in basic and acidic residues. The segment covering Ala211–Ser227 has biased composition (low complexity). Over residues Gly244–Gly255 the composition is skewed to gly residues. Over residues Ser271–Ser280 the composition is skewed to low complexity. Residues Ile317–Asp397 constitute a DNA-binding region (ETS).

The protein belongs to the ETS family. In terms of tissue distribution, embryonic ventral nervous system, higher in the thoracic than abdominal segments.

Its subcellular location is the nucleus. The protein is DNA-binding protein D-ETS-3 (Ets65A) of Drosophila melanogaster (Fruit fly).